Here is a 670-residue protein sequence, read N- to C-terminus: C6 finger domain transcription factor iacK (670 aa).

Residues 1-84 form a disordered region; the sequence is MNTSPDYAQP…GEPKQSGPTV (84 aa). The span at 44-54 shows a compositional bias: pro residues; it reads GPPPPPPPPPT. Low complexity predominate over residues 55 to 74; sequence ATATAATAAATTTTAAPSAT. The zn(2)-C6 fungal-type DNA-binding region spans 88–114; that stretch reads CLACRSKHLKCDGGNPCARCQASESIC. Residues 122 to 157 form a disordered region; it reads GYKGPRRNGTQNPNKRHAAASDDGSPNSNGSNESCP. The segment covering 142–155 has biased composition (low complexity); sequence SDDGSPNSNGSNES.

It is found in the nucleus. Functionally, transcription factor; part of the gene cluster that mediates the biosynthesis of iso-A82775C, a enylepoxycyclohexane and biosynthetic precursor of the chloropestolide anticancer natural products. The protein is C6 finger domain transcription factor iacK of Pestalotiopsis fici (strain W106-1 / CGMCC3.15140).